Here is a 311-residue protein sequence, read N- to C-terminus: Probable protein phosphatase 2C 59 (311 aa).

The span at 1-14 (MGYLNSVLSSSSQV) shows a compositional bias: low complexity. The disordered stretch occupies residues 1–26 (MGYLNSVLSSSSQVHSDDGPVSGGGL). A PPM-type phosphatase domain is found at 33-279 (SYGYASSPGK…DNITCVVVRF (247 aa)). Mn(2+) contacts are provided by aspartate 69, glycine 70, aspartate 231, and aspartate 270.

Belongs to the PP2C family. In terms of assembly, interacts with the Pseudomonas syringae pv. maculicola effector HopW1-1 (via C-terminus). It depends on Mg(2+) as a cofactor. Mn(2+) serves as cofactor.

It carries out the reaction O-phospho-L-seryl-[protein] + H2O = L-seryl-[protein] + phosphate. It catalyses the reaction O-phospho-L-threonyl-[protein] + H2O = L-threonyl-[protein] + phosphate. Its activity is regulated as follows. Inhibited by sodium fluoride (NaF). Functionally, protein phosphatase that modulates defense response to pathogenic bacteria, conferring resistance and promoting salicylic acid (SA) accumulation. The sequence is that of Probable protein phosphatase 2C 59 (WIN2) from Arabidopsis thaliana (Mouse-ear cress).